Consider the following 638-residue polypeptide: Epithelial sodium channel subunit beta (638 aa).

Residues 1–50 (MPVKKYLLKCLHRLQKGPGYTYKELLVWYCNNTNTHGPKRIICEGPKKKA) lie on the Cytoplasmic side of the membrane. Residues 51 to 71 (MWFLLTLLFACLVCWQWGVFI) traverse the membrane as a helical segment. Residues 72–530 (QTYLSWEVSV…GGQFGFWMGG (459 aa)) are Extracellular-facing. Cystine bridges form between cysteine 98–cysteine 270, cysteine 182–cysteine 187, cysteine 194–cysteine 201, cysteine 247–cysteine 254, cysteine 359–cysteine 446, cysteine 384–cysteine 442, cysteine 388–cysteine 438, cysteine 397–cysteine 424, and cysteine 399–cysteine 413. N-linked (GlcNAc...) asparagine glycosylation is found at asparagine 135 and asparagine 141. Residues 531–551 (SVLCLIEFGEIIIDFIWITVI) form a helical membrane-spanning segment. Residues 552–638 (KLVASCKGLR…MESDSEVEAI (87 aa)) are Cytoplasmic-facing. The interval 598–620 (NAEVYPDQQTLPIPGTPPPNYDS) is disordered. The short motif at 614–618 (PPPNY) is the PY motif; recruits WW domain-containing proteins and is thereby required for ubiquitination and inhibition of the channel by NEDD4 and NEDD4L element. Phosphoserine occurs at positions 631 and 633.

It belongs to the amiloride-sensitive sodium channel (TC 1.A.6) family. SCNN1B subfamily. Component of the heterotrimeric epithelial sodium channel (ENaC) composed of an alpha/SCNN1A, a beta/SCNN1B and a gamma/SCNN1G subunit. Interacts with WWP1 (via WW domains). Interacts with WWP2 (via WW domains). Interacts with the full-length immature form of PCSK9 (pro-PCSK9). Interacts (N-glycosylated) with BPIFA1; the interaction is direct and inhibits the proteolytic processing of SCNN1A and SCNN1G and the activation of ENaC. Post-translationally, ubiquitinated. Can be ubiquitinated at multiple sites and undergo monoubiquitination and polyubiquitination. Ubiquitination by NEDD4 or NEDD4L inhibits the ENaC channel through endocytosis, intracellular retention and degradation of its individual subunits. However, some studies could not confirm the ubiquitination of this subunit of the ENaC. In terms of processing, N-glycosylated. N-glycosylation is required for interaction with BPIFA1. Phosphorylated on serine and threonine residues. Aldosterone and insulin increase the basal level of phosphorylation. As to expression, expressed in lung and epididymis. In the caput region of the epididymis, expressed at the luminal and basolateral surfaces of the ducts and in the smooth muscle coat. In the caudal region of the epididymis, expressed along the luminal border but not continuously, in the smooth muscle coat, in the interstitial muscle tissue and in sperm in the caudal lumen.

The protein localises to the apical cell membrane. Its subcellular location is the cytoplasmic vesicle membrane. It catalyses the reaction Na(+)(in) = Na(+)(out). With respect to regulation, originally identified and characterized by its inhibition by the diuretic drug amiloride. Functionally, this is one of the three pore-forming subunits of the heterotrimeric epithelial sodium channel (ENaC), a critical regulator of sodium balance and fluid homeostasis. ENaC operates in epithelial tissues, where it mediates the electrodiffusion of sodium ions from extracellular fluid through the apical membrane of cells, with water following osmotically. It plays a key role in maintaining sodium homeostasis through electrogenic sodium reabsorption in the kidneys. This subunit is not essential for ENaC function in airway surface liquid homeostasis and proper mucus clearance. In Rattus norvegicus (Rat), this protein is Epithelial sodium channel subunit beta.